We begin with the raw amino-acid sequence, 691 residues long: Elongation factor G (691 aa).

One can recognise a tr-type G domain in the interval 8–282 (ERVRNIGIAA…AVVDYLPAPI (275 aa)). Residues 17 to 24 (AHIDAGKT), 81 to 85 (DTPGH), and 135 to 138 (NKMD) contribute to the GTP site.

Belongs to the TRAFAC class translation factor GTPase superfamily. Classic translation factor GTPase family. EF-G/EF-2 subfamily.

It is found in the cytoplasm. Catalyzes the GTP-dependent ribosomal translocation step during translation elongation. During this step, the ribosome changes from the pre-translocational (PRE) to the post-translocational (POST) state as the newly formed A-site-bound peptidyl-tRNA and P-site-bound deacylated tRNA move to the P and E sites, respectively. Catalyzes the coordinated movement of the two tRNA molecules, the mRNA and conformational changes in the ribosome. The chain is Elongation factor G from Synechococcus sp. (strain WH7803).